The primary structure comprises 1214 residues: Inner capsid protein VP3 (1214 aa).

The interval 1 to 80 (MPRRSARKAQ…SVNNDGDIIT (80 aa)) is disordered. The segment covering 8-18 (KAQSATASPAD) has biased composition (polar residues). Positions 28-51 (PTTNSPPSTTSPNQAAADANQQQA) are enriched in low complexity. The C2H2-type zinc-finger motif lies at 117-140 (YVCNVCNARFSTMSALSEHLRSDH).

This sequence belongs to the turreted BTV-fold inner capsid family. Homodecamer; each decamer is made up of two conformers of VP2, called VP2A and VP2B. 12 homodecamers assemble to form an icosahedral capsid. Interacts with VP6.

Its subcellular location is the virion. Its function is as follows. Inner capsid protein that self-assembles to form an icosahedral capsid with a T=2 symmetry, which consists of 120 copies of VP2, with channels at each of its five-fold vertices. This capsid constitutes the innermost concentric layer of the viral mature particle. The chain is Inner capsid protein VP3 (S3) from Notemigonus crysoleucas (Golden shiner).